The primary structure comprises 159 residues: Protein-export protein SecB (159 aa).

It belongs to the SecB family. In terms of assembly, homotetramer, a dimer of dimers. One homotetramer interacts with 1 SecA dimer.

It is found in the cytoplasm. In terms of biological role, one of the proteins required for the normal export of preproteins out of the cell cytoplasm. It is a molecular chaperone that binds to a subset of precursor proteins, maintaining them in a translocation-competent state. It also specifically binds to its receptor SecA. The polypeptide is Protein-export protein SecB (Bartonella bacilliformis (strain ATCC 35685 / KC583 / Herrer 020/F12,63)).